The sequence spans 274 residues: MQFSKMHGLGNDFMVVDAVTQNVFFSPELIRRLADRHLGVGFDQLLVVEPPYDPELDFHYRIFNADGSEVAQCGNGARCFARFVRLKGLTNKRDIRVSTANGRMVLTVTDDDLVRVNMGEPNFEPSAVPFRANKAEKTYIMRAAEQTILCGVVSMGNPHCVIQVDDVDTAAVETLGPVLESHERFPERANIGFMQVVKREHIRLRVYERGAGETQACGSGACAAVAVGIQQGLLDEEVRVELPGGRLDIAWKGPGHPLYMTGPAVHVYDGFIHL.

The substrate site is built by Asn11, Gln44, and Asn64. Residue Cys73 is the Proton donor of the active site. Residues 74–75 (GN), Asn157, Asn190, and 208–209 (ER) each bind substrate. Cys217 acts as the Proton acceptor in catalysis. 218–219 (GS) is a substrate binding site.

Belongs to the diaminopimelate epimerase family. As to quaternary structure, homodimer.

It is found in the cytoplasm. The enzyme catalyses (2S,6S)-2,6-diaminopimelate = meso-2,6-diaminopimelate. The protein operates within amino-acid biosynthesis; L-lysine biosynthesis via DAP pathway; DL-2,6-diaminopimelate from LL-2,6-diaminopimelate: step 1/1. In terms of biological role, catalyzes the stereoinversion of LL-2,6-diaminopimelate (L,L-DAP) to meso-diaminopimelate (meso-DAP), a precursor of L-lysine and an essential component of the bacterial peptidoglycan. This Shigella flexneri serotype 5b (strain 8401) protein is Diaminopimelate epimerase.